A 201-amino-acid chain; its full sequence is UPF0301 protein MAP_0045 (201 aa).

It belongs to the UPF0301 (AlgH) family.

The polypeptide is UPF0301 protein MAP_0045 (Mycolicibacterium paratuberculosis (strain ATCC BAA-968 / K-10) (Mycobacterium paratuberculosis)).